Reading from the N-terminus, the 273-residue chain is 2,3,4,5-tetrahydropyridine-2,6-dicarboxylate N-succinyltransferase (273 aa).

Substrate-binding residues include arginine 104 and aspartate 141.

The protein belongs to the transferase hexapeptide repeat family. In terms of assembly, homotrimer.

The protein localises to the cytoplasm. The catalysed reaction is (S)-2,3,4,5-tetrahydrodipicolinate + succinyl-CoA + H2O = (S)-2-succinylamino-6-oxoheptanedioate + CoA. It participates in amino-acid biosynthesis; L-lysine biosynthesis via DAP pathway; LL-2,6-diaminopimelate from (S)-tetrahydrodipicolinate (succinylase route): step 1/3. The protein is 2,3,4,5-tetrahydropyridine-2,6-dicarboxylate N-succinyltransferase of Azoarcus sp. (strain BH72).